The sequence spans 503 residues: Probable cytosol aminopeptidase (503 aa).

Mn(2+) contacts are provided by Lys270 and Asp275. Residue Lys282 is part of the active site. Mn(2+)-binding residues include Asp293, Asp352, and Glu354. Arg356 is a catalytic residue.

It belongs to the peptidase M17 family. The cofactor is Mn(2+).

The protein resides in the cytoplasm. It carries out the reaction Release of an N-terminal amino acid, Xaa-|-Yaa-, in which Xaa is preferably Leu, but may be other amino acids including Pro although not Arg or Lys, and Yaa may be Pro. Amino acid amides and methyl esters are also readily hydrolyzed, but rates on arylamides are exceedingly low.. The catalysed reaction is Release of an N-terminal amino acid, preferentially leucine, but not glutamic or aspartic acids.. Functionally, presumably involved in the processing and regular turnover of intracellular proteins. Catalyzes the removal of unsubstituted N-terminal amino acids from various peptides. The polypeptide is Probable cytosol aminopeptidase (Sodalis glossinidius (strain morsitans)).